The chain runs to 238 residues: Phosphoribosylaminoimidazole-succinocarboxamide synthase (238 aa).

This sequence belongs to the SAICAR synthetase family.

It catalyses the reaction 5-amino-1-(5-phospho-D-ribosyl)imidazole-4-carboxylate + L-aspartate + ATP = (2S)-2-[5-amino-1-(5-phospho-beta-D-ribosyl)imidazole-4-carboxamido]succinate + ADP + phosphate + 2 H(+). It functions in the pathway purine metabolism; IMP biosynthesis via de novo pathway; 5-amino-1-(5-phospho-D-ribosyl)imidazole-4-carboxamide from 5-amino-1-(5-phospho-D-ribosyl)imidazole-4-carboxylate: step 1/2. The chain is Phosphoribosylaminoimidazole-succinocarboxamide synthase from Marinomonas sp. (strain MWYL1).